A 336-amino-acid chain; its full sequence is DNA-directed RNA polymerase subunit alpha (336 aa).

Positions 1-226 (MLIAQRPTLS…ELFGLARELN (226 aa)) are alpha N-terminal domain (alpha-NTD). Residues 243 to 336 (LAADMALPIE…SDDAFGDDEL (94 aa)) are alpha C-terminal domain (alpha-CTD).

It belongs to the RNA polymerase alpha chain family. Homodimer. The RNAP catalytic core consists of 2 alpha, 1 beta, 1 beta' and 1 omega subunit. When a sigma factor is associated with the core the holoenzyme is formed, which can initiate transcription.

The enzyme catalyses RNA(n) + a ribonucleoside 5'-triphosphate = RNA(n+1) + diphosphate. Functionally, DNA-dependent RNA polymerase catalyzes the transcription of DNA into RNA using the four ribonucleoside triphosphates as substrates. The sequence is that of DNA-directed RNA polymerase subunit alpha from Renibacterium salmoninarum (strain ATCC 33209 / DSM 20767 / JCM 11484 / NBRC 15589 / NCIMB 2235).